Here is a 429-residue protein sequence, read N- to C-terminus: WRKY transcription factor 44 (429 aa).

A DNA-binding region (WRKY 1) is located at residues 159-223 (TGDRSSVDGY…YQGEHNHSKP (65 aa)). Cys190, Cys195, His218, and His220 together coordinate Zn(2+). 2 disordered regions span residues 214 to 279 (YQGE…RTEK) and 292 to 348 (AVPR…SDSL). 3 stretches are compositionally biased toward polar residues: residues 254-275 (QDPN…STQN), 295-313 (RSTN…SSQC), and 334-345 (SEAGVSQGSVES). Residues 343–408 (VESDSLEDGF…YEGKHNHHLL (66 aa)) constitute a DNA-binding region (WRKY 2). Positions 374, 379, 403, and 405 each coordinate Zn(2+). Positions 410 to 422 (SPPSSSTLPFNSP) are enriched in low complexity. The interval 410-429 (SPPSSSTLPFNSPQLSKQTI) is disordered.

The protein belongs to the WRKY group I family. In terms of tissue distribution, leaf promordia, trichomes, atrichoblasts, fertilized eggs, seed coat.

It is found in the nucleus. In terms of biological role, transcription factor. Interacts specifically with the W box (5'-(T)TGAC[CT]-3'), a frequently occurring elicitor-responsive cis-acting element. Regulates trichome development, production of mucilage and tannin in seed coats, and maybe root hair development. This chain is WRKY transcription factor 44 (WRKY44), found in Arabidopsis thaliana (Mouse-ear cress).